We begin with the raw amino-acid sequence, 674 residues long: ATP-citrate synthase subunit 1 (674 aa).

The segment covering 1 to 10 has biased composition (low complexity); it reads MPSATSTNGA. The tract at residues 1-26 is disordered; sequence MPSATSTNGANGNGNGNGASASPAPG. ATP-binding positions include 261-281 and 312-338; these read LLRYQADPACKILVLLGEVGG and FKTEVQFGHAGAFANSQLETAATKNKS. A Mg(2+)-binding site is contributed by glutamate 278. The Tele-phosphohistidine intermediate role is filled by histidine 320. 339–349 serves as a coordination point for CoA; the sequence is MREAGFYVPDT.

This sequence belongs to the succinate/malate CoA ligase alpha subunit family. Composed of two subunits.

Its subcellular location is the cytoplasm. The enzyme catalyses oxaloacetate + acetyl-CoA + ADP + phosphate = citrate + ATP + CoA. In terms of biological role, catalyzes the formation of cytosolic acetyl-CoA, which is mainly used for the biosynthesis of fatty acids and sterols. The chain is ATP-citrate synthase subunit 1 (ACL1) from Sordaria macrospora (strain ATCC MYA-333 / DSM 997 / K(L3346) / K-hell).